An 81-amino-acid polypeptide reads, in one-letter code: MAHSVKIYDTCIGCTQCVRACPTDVLEMIPWDGCKANQIASAPRTEDCVGCKRCESACPTDFLSVRVYLGAETTRSMGLAY.

4Fe-4S ferredoxin-type domains are found at residues 2 to 31 (AHSV…MIPW) and 39 to 68 (IASA…VRVY). Residues cysteine 11, cysteine 14, cysteine 17, cysteine 21, cysteine 48, cysteine 51, cysteine 54, and cysteine 58 each contribute to the [4Fe-4S] cluster site.

As to quaternary structure, the eukaryotic PSI reaction center is composed of at least 11 subunits. Requires [4Fe-4S] cluster as cofactor.

It localises to the plastid. The protein localises to the chloroplast thylakoid membrane. The enzyme catalyses reduced [plastocyanin] + hnu + oxidized [2Fe-2S]-[ferredoxin] = oxidized [plastocyanin] + reduced [2Fe-2S]-[ferredoxin]. In terms of biological role, apoprotein for the two 4Fe-4S centers FA and FB of photosystem I (PSI); essential for photochemical activity. FB is the terminal electron acceptor of PSI, donating electrons to ferredoxin. The C-terminus interacts with PsaA/B/D and helps assemble the protein into the PSI complex. Required for binding of PsaD and PsaE to PSI. PSI is a plastocyanin-ferredoxin oxidoreductase, converting photonic excitation into a charge separation, which transfers an electron from the donor P700 chlorophyll pair to the spectroscopically characterized acceptors A0, A1, FX, FA and FB in turn. This Adiantum capillus-veneris (Maidenhair fern) protein is Photosystem I iron-sulfur center.